A 75-amino-acid chain; its full sequence is uncharacterized protein (75 aa).

This is an uncharacterized protein from Orgyia pseudotsugata (Douglas-fir tussock moth).